We begin with the raw amino-acid sequence, 58 residues long: Small ribosomal subunit protein bS21 (58 aa).

Positions phenylalanine 37–phenylalanine 58 are disordered. Residues valine 43–phenylalanine 58 are compositionally biased toward basic residues.

Belongs to the bacterial ribosomal protein bS21 family.

The protein is Small ribosomal subunit protein bS21 of Streptococcus sanguinis (strain SK36).